A 344-amino-acid polypeptide reads, in one-letter code: Holliday junction branch migration complex subunit RuvB (344 aa).

Positions 1 to 182 (MSDRLISATA…FGIISRLEFY (182 aa)) are large ATPase domain (RuvB-L). ATP contacts are provided by residues L21, R22, G63, K66, T67, T68, 129 to 131 (EDF), R172, Y182, and R219. T67 contributes to the Mg(2+) binding site. The interval 183-253 (NNEDLTRIVT…VAAEALEFFE (71 aa)) is small ATPAse domain (RuvB-S). Residues 256–344 (PLGLDHTDRR…QKGLEQNSLF (89 aa)) form a head domain (RuvB-H) region. Positions 311 and 316 each coordinate DNA.

Belongs to the RuvB family. Homohexamer. Forms an RuvA(8)-RuvB(12)-Holliday junction (HJ) complex. HJ DNA is sandwiched between 2 RuvA tetramers; dsDNA enters through RuvA and exits via RuvB. An RuvB hexamer assembles on each DNA strand where it exits the tetramer. Each RuvB hexamer is contacted by two RuvA subunits (via domain III) on 2 adjacent RuvB subunits; this complex drives branch migration. In the full resolvosome a probable DNA-RuvA(4)-RuvB(12)-RuvC(2) complex forms which resolves the HJ.

It is found in the cytoplasm. It catalyses the reaction ATP + H2O = ADP + phosphate + H(+). Its function is as follows. The RuvA-RuvB-RuvC complex processes Holliday junction (HJ) DNA during genetic recombination and DNA repair, while the RuvA-RuvB complex plays an important role in the rescue of blocked DNA replication forks via replication fork reversal (RFR). RuvA specifically binds to HJ cruciform DNA, conferring on it an open structure. The RuvB hexamer acts as an ATP-dependent pump, pulling dsDNA into and through the RuvAB complex. RuvB forms 2 homohexamers on either side of HJ DNA bound by 1 or 2 RuvA tetramers; 4 subunits per hexamer contact DNA at a time. Coordinated motions by a converter formed by DNA-disengaged RuvB subunits stimulates ATP hydrolysis and nucleotide exchange. Immobilization of the converter enables RuvB to convert the ATP-contained energy into a lever motion, pulling 2 nucleotides of DNA out of the RuvA tetramer per ATP hydrolyzed, thus driving DNA branch migration. The RuvB motors rotate together with the DNA substrate, which together with the progressing nucleotide cycle form the mechanistic basis for DNA recombination by continuous HJ branch migration. Branch migration allows RuvC to scan DNA until it finds its consensus sequence, where it cleaves and resolves cruciform DNA. This chain is Holliday junction branch migration complex subunit RuvB, found in Desulforamulus reducens (strain ATCC BAA-1160 / DSM 100696 / MI-1) (Desulfotomaculum reducens).